We begin with the raw amino-acid sequence, 412 residues long: Small ribosomal subunit protein mL103 (rPPR7) (412 aa).

The transit peptide at 1-14 directs the protein to the mitochondrion; it reads MASSRISLRLVRRF. Polar residues predominate over residues 21-37; the sequence is GTTTAPSSGKISVSKAK. The segment at 21-43 is disordered; the sequence is GTTTAPSSGKISVSKAKSTLRKE. PPR repeat units follow at residues 101 to 135, 136 to 166, 173 to 207, 208 to 242, 243 to 276, 277 to 311, 312 to 346, and 347 to 377; these read EEPFYSTLIRSYGQASMFNHAMRTFEQMDQYGTPR, SAVSFNALLNACLHSKNFDKVPQLFDEIPQR, DKISYGILIKSYCDSGTPEKAIEIMRQMQGKGMEV, TTIAFTTILSSLYKKGELEVADNLWNEMVKKGCEL, DNAAYNVRIMSAQKESPERVKELIEEMSSMGLKP, DTISYNYLMTAYCERGMLDEAKKVYEGLEGNNCAP, NAATFRTLIFHLCYSRLYEQGYAIFKKSVYMHKIP, and DFNTLKHLVVGLVENKKRDDAKGLIRTVKKK.

It belongs to the PPR family. P subfamily. As to quaternary structure, component of the mitochondrial ribosome small subunit.

It localises to the mitochondrion. The sequence is that of Small ribosomal subunit protein mL103 (rPPR7) from Arabidopsis thaliana (Mouse-ear cress).